The primary structure comprises 333 residues: Delta-aminolevulinic acid dehydratase (333 aa).

Cys-127, Cys-129, and Cys-137 together coordinate Zn(2+). The active-site Schiff-base intermediate with substrate is Lys-204. Residues Arg-214 and Arg-226 each contribute to the 5-aminolevulinate site. Catalysis depends on Lys-257, which acts as the Schiff-base intermediate with substrate. 2 residues coordinate 5-aminolevulinate: Ser-283 and Tyr-322.

This sequence belongs to the ALAD family. In terms of assembly, homooctamer. Zn(2+) serves as cofactor.

It carries out the reaction 2 5-aminolevulinate = porphobilinogen + 2 H2O + H(+). It participates in porphyrin-containing compound metabolism; protoporphyrin-IX biosynthesis; coproporphyrinogen-III from 5-aminolevulinate: step 1/4. In terms of biological role, catalyzes an early step in the biosynthesis of tetrapyrroles. Binds two molecules of 5-aminolevulinate per subunit, each at a distinct site, and catalyzes their condensation to form porphobilinogen. The sequence is that of Delta-aminolevulinic acid dehydratase (alad) from Dictyostelium discoideum (Social amoeba).